The primary structure comprises 557 residues: Dihydroxy-acid dehydratase (557 aa).

Residue cysteine 50 participates in [2Fe-2S] cluster binding. Residue aspartate 82 coordinates Mg(2+). Position 123 (cysteine 123) interacts with [2Fe-2S] cluster. Mg(2+)-binding residues include aspartate 124 and lysine 125. Position 125 is an N6-carboxylysine (lysine 125). Cysteine 195 serves as a coordination point for [2Fe-2S] cluster. Glutamate 447 contacts Mg(2+). Serine 473 functions as the Proton acceptor in the catalytic mechanism.

Belongs to the IlvD/Edd family. As to quaternary structure, homodimer. [2Fe-2S] cluster serves as cofactor. The cofactor is Mg(2+).

It catalyses the reaction (2R)-2,3-dihydroxy-3-methylbutanoate = 3-methyl-2-oxobutanoate + H2O. The catalysed reaction is (2R,3R)-2,3-dihydroxy-3-methylpentanoate = (S)-3-methyl-2-oxopentanoate + H2O. It participates in amino-acid biosynthesis; L-isoleucine biosynthesis; L-isoleucine from 2-oxobutanoate: step 3/4. Its pathway is amino-acid biosynthesis; L-valine biosynthesis; L-valine from pyruvate: step 3/4. In terms of biological role, functions in the biosynthesis of branched-chain amino acids. Catalyzes the dehydration of (2R,3R)-2,3-dihydroxy-3-methylpentanoate (2,3-dihydroxy-3-methylvalerate) into 2-oxo-3-methylpentanoate (2-oxo-3-methylvalerate) and of (2R)-2,3-dihydroxy-3-methylbutanoate (2,3-dihydroxyisovalerate) into 2-oxo-3-methylbutanoate (2-oxoisovalerate), the penultimate precursor to L-isoleucine and L-valine, respectively. The sequence is that of Dihydroxy-acid dehydratase from Burkholderia pseudomallei (strain 1710b).